A 210-amino-acid chain; its full sequence is Heart- and neural crest derivatives-expressed protein 2 (210 aa).

A disordered region spans residues 81–101 (SGAGGLMQRPVKRRGTANRKE). The span at 90–101 (PVKRRGTANRKE) shows a compositional bias: basic residues. A bHLH domain is found at 92–144 (KRRGTANRKERRRTISINSAFAELRECIPNVPADTKLSKIKTLRLATSYIAYL).

As to quaternary structure, efficient DNA binding requires dimerization with another bHLH protein. In terms of tissue distribution, heart, liver and spleen.

The protein localises to the nucleus. Essential for cardiac morphogenesis and for the development of branchial arches. Binds DNA on E-box consensus sequence 5'-CANNTG-3'. The sequence is that of Heart- and neural crest derivatives-expressed protein 2 (hand2) from Xenopus laevis (African clawed frog).